Here is a 170-residue protein sequence, read N- to C-terminus: Cathelicidin antimicrobial peptide (170 aa).

Positions 1-30 (MKTQRDGPSLGRWSLVLLLLGLTMPLAVIA) are cleaved as a signal peptide. Residues 31–131 (RVLSYQEAVL…DISCDKDKRK (101 aa)) constitute a propeptide, cathelin-like domain (CLD). Disulfide bonds link C86–C97 and C108–C125. The segment at 150–162 (LKNIGQRIKDFFG) is active core.

The protein belongs to the cathelicidin family. As to quaternary structure, monomer, homodimer or homotrimer (in vitro). Oligomerizes as tetra- or hexamer in solution (in vitro). Proteolytically cleaved by proteinase PRTN3 into antibacterial peptide LL-37. Proteolytically cleaved by cathepsin CTSG and neutrophil elastase ELANE. In terms of processing, resistant to proteolytic degradation in solution, and when bound to both zwitterionic (mimicking mammalian membranes) and negatively charged membranes (mimicking bacterial membranes). Post-translationally, after secretion onto the skin surface, the CAMP gene product is processed by a serine protease-dependent mechanism into multiple novel antimicrobial peptides distinct from and shorter than cathelicidin LL-37. These peptides show enhanced antimicrobial action, acquiring the ability to kill skin pathogens such as S.aureus, E.coli and C.albicans. These peptides have lost the ability to stimulate CXCL8/IL8 release from keratinocytes. The peptides act synergistically, killing bacteria at lower concentrations when present together, and maintain activity at increased salt condition.

The protein localises to the secreted. It is found in the vesicle. Functionally, antimicrobial protein that is an integral component of the innate immune system. Binds to bacterial lipopolysaccharides (LPS). Acts via neutrophil N-formyl peptide receptors to enhance the release of CXCL2. Postsecretory processing generates multiple cathelicidin antimicrobial peptides with various lengths which act as a topical antimicrobial defense in sweat on skin. The unprocessed precursor form, cathelicidin antimicrobial peptide, inhibits the growth of Gram-negative E.coli and E.aerogenes with efficiencies comparable to that of the mature peptide LL-37 (in vitro). In terms of biological role, antimicrobial peptide that is an integral component of the innate immune system. Binds to bacterial lipopolysaccharides (LPS). Causes membrane permeabilization by forming transmembrane pores (in vitro). Causes lysis of E.coli. Exhibits antimicrobial activity against Gram-negative bacteria such as P.aeruginosa, S.typhimurium, E.aerogenes, E.coli and P.syringae, Gram-positive bacteria such as L.monocytogenes, S.epidermidis, S.pyogenes and S.aureus, as well as vancomycin-resistant enterococci (in vitro). Exhibits antimicrobial activity against methicillin-resistant S.aureus, P.mirabilis, and C.albicans in low-salt media, but not in media containing 100 mM NaCl (in vitro). Forms chiral supramolecular assemblies with quinolone signal (PQS) molecules of P.aeruginosa, which may lead to interference of bacterial quorum signaling and perturbance of bacterial biofilm formation. May form supramolecular fiber-like assemblies on bacterial membranes. Induces cytokine and chemokine producation as well as TNF/TNFA and CSF2/GMCSF production in normal human keratinocytes. Exhibits hemolytic activity against red blood cells. Its function is as follows. Exhibits antimicrobial activity against E.coli and B.megaterium (in vitro). In Ateles fusciceps robustus (Colombian black-faced spider monkey), this protein is Cathelicidin antimicrobial peptide.